We begin with the raw amino-acid sequence, 464 residues long: MGKRLLDKLWERHVVATNENGLDLLYIDLHLVHEVTSPQAFEGLRLTNRTVRRPDLTFATMDHNIPTKDVWNITDRIAKQQLDTLRQNCKQFQVPLADIGDEEQGIVHVIGPELGLTQPGKTIVCGDSHTATHGAFGALAFGIGTSEVEHVLATQTLWQRKPKAMGIELKGKLPQGVYAKDIILHLLSKYGVAVGTGYVMEFYGEAIHAMDMEERMTLCNMAIEGGAKAGIIAPDEKTFAYVKGRKYAPKDYESIKKKWSELYTDLDAVYDLHILVDVTDLAPYVTWGTNPSMGVRIDEKLPEKHDANDERAFSYMGLSPGQSTYDIPVQHVFIGSCTNSRLSDLEIAASVVKGKKVKEGVRALVVPGSQRVREAAMHKGLHRIFEEAGFEWREPGCSMCLGMNPDQVPEGEHCASTSNRNFEGRQGKGARTHLVSPAMAAAAALYGHFVDIRKESYDGAISYS.

[4Fe-4S] cluster is bound by residues cysteine 337, cysteine 397, and cysteine 400.

Belongs to the aconitase/IPM isomerase family. LeuC type 1 subfamily. Heterodimer of LeuC and LeuD. Requires [4Fe-4S] cluster as cofactor.

It catalyses the reaction (2R,3S)-3-isopropylmalate = (2S)-2-isopropylmalate. It functions in the pathway amino-acid biosynthesis; L-leucine biosynthesis; L-leucine from 3-methyl-2-oxobutanoate: step 2/4. Its function is as follows. Catalyzes the isomerization between 2-isopropylmalate and 3-isopropylmalate, via the formation of 2-isopropylmaleate. This is 3-isopropylmalate dehydratase large subunit from Bacillus cereus (strain ATCC 14579 / DSM 31 / CCUG 7414 / JCM 2152 / NBRC 15305 / NCIMB 9373 / NCTC 2599 / NRRL B-3711).